A 256-amino-acid polypeptide reads, in one-letter code: Trypsin, alkaline C (256 aa).

The first 17 residues, 1–17 (MRLFLALLALGFAAVAA), serve as a signal peptide directing secretion. The propeptide at 18-24 (VPANPQR) is activation peptide. The region spanning 25–256 (IVGGSTTTIQ…RYTSWISNNS (232 aa)) is the Peptidase S1 domain. Cys55 and Cys71 are disulfide-bonded. Catalysis depends on charge relay system residues His70 and Asp115. Intrachain disulfides connect Cys180-Cys197 and Cys209-Cys233. The Charge relay system role is filled by Ser213.

This sequence belongs to the peptidase S1 family. In terms of tissue distribution, midgut.

The protein resides in the secreted. It localises to the extracellular space. The enzyme catalyses Preferential cleavage: Arg-|-Xaa, Lys-|-Xaa.. This chain is Trypsin, alkaline C, found in Manduca sexta (Tobacco hawkmoth).